The sequence spans 67 residues: Beta-defensin 103 (67 aa).

The first 22 residues, 1-22, serve as a signal peptide directing secretion; that stretch reads MRIHYLLFALLFLFLVPVPGHG. 3 disulfide bridges follow: C33-C62, C40-C55, and C45-C63.

Highly expressed in skin and tonsils, and to a lesser extent in trachea, uterus, kidney, thymus, adenoid, pharynx and tongue. Low expression in salivary gland, bone marrow, colon, stomach, polyp and larynx. No expression in small intestine.

Its subcellular location is the secreted. Its function is as follows. Exhibits antimicrobial activity against Gram-positive bacteria S.aureus and S.pyogenes, Gram-negative bacteria P.aeruginosa and E.coli and the yeast C.albicans. Kills multiresistant S.aureus and vancomycin-resistant E.faecium. No significant hemolytic activity was observed. In Homo sapiens (Human), this protein is Beta-defensin 103 (DEFB103A).